We begin with the raw amino-acid sequence, 398 residues long: Subtilisin-like protease CPC735_015300 (398 aa).

The signal sequence occupies residues 1-19; it reads MGFIKTLSLSLAAASAANA. Residues 20-116 constitute a propeptide that is removed on maturation; the sequence is AKILSPSRPD…IEHDHVVRLT (97 aa). Residues 35–115 form the Inhibitor I9 domain; that stretch reads QYIVVMKDGV…FIEHDHVVRL (81 aa). The Peptidase S8 domain maps to 126 to 398; that stretch reads TWGLGRVSHQ…NKLTYNGNGQ (273 aa). Residues aspartate 158 and histidine 189 each act as charge relay system in the active site. Asparagine 250 carries N-linked (GlcNAc...) asparagine glycosylation. The active-site Charge relay system is the serine 344. An N-linked (GlcNAc...) asparagine glycan is attached at asparagine 362.

The protein belongs to the peptidase S8 family.

Its subcellular location is the secreted. In terms of biological role, secreted subtilisin-like serine protease with keratinolytic activity that contributes to pathogenicity. The sequence is that of Subtilisin-like protease CPC735_015300 from Coccidioides posadasii (strain C735) (Valley fever fungus).